The primary structure comprises 137 residues: 3-hydroxyacyl-[acyl-carrier-protein] dehydratase FabZ (137 aa).

The active site involves H46.

This sequence belongs to the thioester dehydratase family. FabZ subfamily.

The protein localises to the cytoplasm. The enzyme catalyses a (3R)-hydroxyacyl-[ACP] = a (2E)-enoyl-[ACP] + H2O. Functionally, involved in unsaturated fatty acids biosynthesis. Catalyzes the dehydration of short chain beta-hydroxyacyl-ACPs and long chain saturated and unsaturated beta-hydroxyacyl-ACPs. This Thermotoga neapolitana (strain ATCC 49049 / DSM 4359 / NBRC 107923 / NS-E) protein is 3-hydroxyacyl-[acyl-carrier-protein] dehydratase FabZ.